The sequence spans 413 residues: Imidazolonepropionase (413 aa).

The Fe(3+) site is built by histidine 79 and histidine 81. Residues histidine 79 and histidine 81 each coordinate Zn(2+). The 4-imidazolone-5-propanoate site is built by arginine 88, tyrosine 151, and histidine 184. Tyrosine 151 contacts N-formimidoyl-L-glutamate. Histidine 248 serves as a coordination point for Fe(3+). A Zn(2+)-binding site is contributed by histidine 248. Glutamate 251 is a 4-imidazolone-5-propanoate binding site. Aspartate 322 contributes to the Fe(3+) binding site. Aspartate 322 serves as a coordination point for Zn(2+). Asparagine 324 and glycine 326 together coordinate N-formimidoyl-L-glutamate. Residue serine 327 coordinates 4-imidazolone-5-propanoate.

The protein belongs to the metallo-dependent hydrolases superfamily. HutI family. The cofactor is Zn(2+). It depends on Fe(3+) as a cofactor.

It is found in the cytoplasm. The enzyme catalyses 4-imidazolone-5-propanoate + H2O = N-formimidoyl-L-glutamate. Its pathway is amino-acid degradation; L-histidine degradation into L-glutamate; N-formimidoyl-L-glutamate from L-histidine: step 3/3. Functionally, catalyzes the hydrolytic cleavage of the carbon-nitrogen bond in imidazolone-5-propanoate to yield N-formimidoyl-L-glutamate. It is the third step in the universal histidine degradation pathway. The protein is Imidazolonepropionase of Fusobacterium nucleatum subsp. nucleatum (strain ATCC 25586 / DSM 15643 / BCRC 10681 / CIP 101130 / JCM 8532 / KCTC 2640 / LMG 13131 / VPI 4355).